We begin with the raw amino-acid sequence, 370 residues long: Muconate cycloisomerase 1 (370 aa).

Residue K166 is part of the active site. Positions 195, 221, and 246 each coordinate Mn(2+).

This sequence belongs to the mandelate racemase/muconate lactonizing enzyme family. In terms of assembly, homooctamer. The cofactor is Mn(2+).

It carries out the reaction (S)-muconolactone = cis,cis-muconate + H(+). It participates in aromatic compound metabolism; beta-ketoadipate pathway; 5-oxo-4,5-dihydro-2-furylacetate from catechol: step 2/3. In terms of biological role, catalyzes a syn cycloisomerization. This chain is Muconate cycloisomerase 1 (catB), found in Acinetobacter baylyi (strain ATCC 33305 / BD413 / ADP1).